We begin with the raw amino-acid sequence, 503 residues long: Probable cytosol aminopeptidase (503 aa).

Residues Lys270 and Asp275 each contribute to the Mn(2+) site. Lys282 is a catalytic residue. Mn(2+) contacts are provided by Asp293, Asp352, and Glu354. Arg356 is a catalytic residue.

Belongs to the peptidase M17 family. The cofactor is Mn(2+).

The protein localises to the cytoplasm. It catalyses the reaction Release of an N-terminal amino acid, Xaa-|-Yaa-, in which Xaa is preferably Leu, but may be other amino acids including Pro although not Arg or Lys, and Yaa may be Pro. Amino acid amides and methyl esters are also readily hydrolyzed, but rates on arylamides are exceedingly low.. The enzyme catalyses Release of an N-terminal amino acid, preferentially leucine, but not glutamic or aspartic acids.. Functionally, presumably involved in the processing and regular turnover of intracellular proteins. Catalyzes the removal of unsubstituted N-terminal amino acids from various peptides. The polypeptide is Probable cytosol aminopeptidase (Enterobacter sp. (strain 638)).